Reading from the N-terminus, the 260-residue chain is UPF0246 protein APL_0602 (260 aa).

It belongs to the UPF0246 family.

The chain is UPF0246 protein APL_0602 from Actinobacillus pleuropneumoniae serotype 5b (strain L20).